A 68-amino-acid polypeptide reads, in one-letter code: Alpha-conotoxin-like Mr1.2 (68 aa).

Positions 1–21 (MGMRMMFTVFLLVVLATTVVS) are cleaved as a signal peptide. The propeptide occupies 22-48 (FTSDRGSDGRNAAAKDKASDLVALTVK). 2 disulfides stabilise this stretch: Cys-50-Cys-56 and Cys-51-Cys-64. Positions 52-54 (SNP) are ser-Xaa-Pro motif, crucial for potent interaction with nAChR. Asn-65 is modified (asparagine amide).

Belongs to the conotoxin A superfamily. In terms of tissue distribution, expressed by the venom duct.

The protein resides in the secreted. In terms of biological role, alpha-conotoxins act on postsynaptic membranes, they bind to the nicotinic acetylcholine receptors (nAChR) and thus inhibit them. The sequence is that of Alpha-conotoxin-like Mr1.2 from Conus marmoreus (Marble cone).